We begin with the raw amino-acid sequence, 53 residues long: Zinc metalloproteinase-disintegrin-like alborhagin (53 aa).

It belongs to the venom metalloproteinase (M12B) family. P-III subfamily. P-IIIb sub-subfamily. Monomer. Zn(2+) is required as a cofactor. In terms of processing, contains numerous disulfide bonds. Glycosylated. As to expression, expressed by the venom gland.

The protein resides in the secreted. Its activity is regulated as follows. Alborhagin-induced platelet aggregation, but not shape change, is inhibited by EDTA, suggesting that the platelet activation (shape change) is independent of divalent cation or metalloproteinase activity. Functionally, induces platelet activation and glycoprotein VI (GP6)-dependent platelet aggregation. Induces ectodomain cleavage of GP6 by activating endogenous platelet metalloproteinases (probably ADAM10). Has fibrinogenolytic activity against the alpha chain of fibrinogen (FGA). Recognizes distinct binding sites as convulxin, since alborhagin has minimal effect on convulxin binding to GPVI-expressing cells. Disintegrin alborhagin-C: 42 kDa fragment of alborhagin autoproteolysed that does not show platelet activation. The chain is Zinc metalloproteinase-disintegrin-like alborhagin from Trimeresurus albolabris (White-lipped pit viper).